The following is a 498-amino-acid chain: ATP synthase subunit beta, chloroplastic (498 aa).

Position 172-179 (172-179 (GGAGVGKT)) interacts with ATP.

The protein belongs to the ATPase alpha/beta chains family. F-type ATPases have 2 components, CF(1) - the catalytic core - and CF(0) - the membrane proton channel. CF(1) has five subunits: alpha(3), beta(3), gamma(1), delta(1), epsilon(1). CF(0) has four main subunits: a(1), b(1), b'(1) and c(9-12).

It is found in the plastid. The protein localises to the chloroplast thylakoid membrane. The enzyme catalyses ATP + H2O + 4 H(+)(in) = ADP + phosphate + 5 H(+)(out). Functionally, produces ATP from ADP in the presence of a proton gradient across the membrane. The catalytic sites are hosted primarily by the beta subunits. This chain is ATP synthase subunit beta, chloroplastic, found in Nymphaea odorata (White water lily).